Here is a 200-residue protein sequence, read N- to C-terminus: Small ribosomal subunit protein uS4c (200 aa).

The S4 RNA-binding domain maps to Ile88–Cys148.

The protein belongs to the universal ribosomal protein uS4 family. As to quaternary structure, part of the 30S ribosomal subunit.

It localises to the plastid. The protein localises to the apicoplast. One of the primary rRNA binding proteins, it binds directly to 16S rRNA where it nucleates assembly of the body of the 30S subunit. This is Small ribosomal subunit protein uS4c (rps4) from Eimeria tenella (Coccidian parasite).